The chain runs to 476 residues: tRNA(Ile)-lysidine synthase (476 aa).

30 to 35 contributes to the ATP binding site; that stretch reads SGGPDS.

The protein belongs to the tRNA(Ile)-lysidine synthase family.

The protein resides in the cytoplasm. The enzyme catalyses cytidine(34) in tRNA(Ile2) + L-lysine + ATP = lysidine(34) in tRNA(Ile2) + AMP + diphosphate + H(+). Ligates lysine onto the cytidine present at position 34 of the AUA codon-specific tRNA(Ile) that contains the anticodon CAU, in an ATP-dependent manner. Cytidine is converted to lysidine, thus changing the amino acid specificity of the tRNA from methionine to isoleucine. The polypeptide is tRNA(Ile)-lysidine synthase (Bacillus anthracis).